The primary structure comprises 215 residues: MSTGITIALSKGRILQEAIPLFAGAGIHLAEDPEESRKLIIPSTDPTVRFLVIRASDVPTYVTWGAADVGIAGKDVLLEQEGLDLYEPLDLRIGICHMAVAEPAAMAADDAPQSWERVRIATKYPHITRHYFHSRGVQTEIIKLYGSMELAPLVGLADRIVDLVSSGRTLKENGLVEVEEIMPISSRLVVNRAAMKLKRRAIETLIRQLEAQVTP.

This sequence belongs to the ATP phosphoribosyltransferase family. Short subfamily. As to quaternary structure, heteromultimer composed of HisG and HisZ subunits.

It localises to the cytoplasm. The catalysed reaction is 1-(5-phospho-beta-D-ribosyl)-ATP + diphosphate = 5-phospho-alpha-D-ribose 1-diphosphate + ATP. Its pathway is amino-acid biosynthesis; L-histidine biosynthesis; L-histidine from 5-phospho-alpha-D-ribose 1-diphosphate: step 1/9. In terms of biological role, catalyzes the condensation of ATP and 5-phosphoribose 1-diphosphate to form N'-(5'-phosphoribosyl)-ATP (PR-ATP). Has a crucial role in the pathway because the rate of histidine biosynthesis seems to be controlled primarily by regulation of HisG enzymatic activity. This chain is ATP phosphoribosyltransferase, found in Acidithiobacillus ferrooxidans (strain ATCC 23270 / DSM 14882 / CIP 104768 / NCIMB 8455) (Ferrobacillus ferrooxidans (strain ATCC 23270)).